The following is a 179-amino-acid chain: ATP synthase subunit b (179 aa).

The chain crosses the membrane as a helical span at residues 23–43 (IVVGLVAFGLLAFVLMKFVFP).

It belongs to the ATPase B chain family. As to quaternary structure, F-type ATPases have 2 components, F(1) - the catalytic core - and F(0) - the membrane proton channel. F(1) has five subunits: alpha(3), beta(3), gamma(1), delta(1), epsilon(1). F(0) has three main subunits: a(1), b(2) and c(10-14). The alpha and beta chains form an alternating ring which encloses part of the gamma chain. F(1) is attached to F(0) by a central stalk formed by the gamma and epsilon chains, while a peripheral stalk is formed by the delta and b chains.

Its subcellular location is the cell membrane. In terms of biological role, f(1)F(0) ATP synthase produces ATP from ADP in the presence of a proton or sodium gradient. F-type ATPases consist of two structural domains, F(1) containing the extramembraneous catalytic core and F(0) containing the membrane proton channel, linked together by a central stalk and a peripheral stalk. During catalysis, ATP synthesis in the catalytic domain of F(1) is coupled via a rotary mechanism of the central stalk subunits to proton translocation. Its function is as follows. Component of the F(0) channel, it forms part of the peripheral stalk, linking F(1) to F(0). This chain is ATP synthase subunit b, found in Salinispora arenicola (strain CNS-205).